A 594-amino-acid polypeptide reads, in one-letter code: APOBEC1 complementation factor (594 aa).

RRM domains follow at residues 56–134, 136–218, and 231–303; these read CEIF…ASVD, CRLF…WAEP, and KILY…LAKP. The tract at residues 359 to 408 is required for nuclear localization; it reads HFPATKGHLSNRALIRTPSVREIYMNVPVGAAGVRGLGGRGYLAYTGLGR. A Phosphothreonine modification is found at T498.

In terms of assembly, part of the apolipoprotein B mRNA editing complex with APOBEC1. Interacts with TNPO2; TNPO2 may be responsible for transport of A1CF into the nucleus. Interacts with SYNCRIP. Interacts with CELF2/CUGBP2. Interacts with RBM47. In terms of tissue distribution, isoforms 1 and 2 are widely expressed while isoforms 3 and 4 are restricted to liver and small intestine.

It localises to the nucleus. Its subcellular location is the endoplasmic reticulum. The protein resides in the cytoplasm. Functionally, essential component of the apolipoprotein B mRNA editing enzyme complex which is responsible for the postranscriptional editing of a CAA codon for Gln to a UAA codon for stop in APOB mRNA. Binds to APOB mRNA and is probably responsible for docking the catalytic subunit, APOBEC1, to the mRNA to allow it to deaminate its target cytosine. The complex also seems to protect the edited APOB mRNA from nonsense-mediated decay. In Rattus norvegicus (Rat), this protein is APOBEC1 complementation factor (A1cf).